We begin with the raw amino-acid sequence, 264 residues long: Thymidylate synthase (264 aa).

DUMP is bound at residue Arg21. His51 is a binding site for (6R)-5,10-methylene-5,6,7,8-tetrahydrofolate. 126-127 (RR) lines the dUMP pocket. Cys146 functions as the Nucleophile in the catalytic mechanism. DUMP contacts are provided by residues 166-169 (RSGD), Asn177, and 207-209 (HIY). Residue Asp169 coordinates (6R)-5,10-methylene-5,6,7,8-tetrahydrofolate. Ala263 contacts (6R)-5,10-methylene-5,6,7,8-tetrahydrofolate.

The protein belongs to the thymidylate synthase family. Bacterial-type ThyA subfamily. Homodimer.

Its subcellular location is the cytoplasm. It carries out the reaction dUMP + (6R)-5,10-methylene-5,6,7,8-tetrahydrofolate = 7,8-dihydrofolate + dTMP. Its pathway is pyrimidine metabolism; dTTP biosynthesis. In terms of biological role, catalyzes the reductive methylation of 2'-deoxyuridine-5'-monophosphate (dUMP) to 2'-deoxythymidine-5'-monophosphate (dTMP) while utilizing 5,10-methylenetetrahydrofolate (mTHF) as the methyl donor and reductant in the reaction, yielding dihydrofolate (DHF) as a by-product. This enzymatic reaction provides an intracellular de novo source of dTMP, an essential precursor for DNA biosynthesis. In Sinorhizobium medicae (strain WSM419) (Ensifer medicae), this protein is Thymidylate synthase.